We begin with the raw amino-acid sequence, 226 residues long: MLTWLTRDSLTFPPLEKALQDPNGLLAAGGDLSPERLVQAYRHGCFPWYQDGQPILWWSPDPRTVLFPNELHVSRSLAKLLRQGRYQVSFDTDFPAVIDACAAPRDYADGTWITDTMRNAYCELHRRGIAHSVEVRHNGELVGGLYGLAMGRLFFGESMFSRADNASKVGFVTLVKHLQEAGFVLIDCQMPTDHLHSLGARAISRASFADYLAHHLDQPNSASWRS.

The protein belongs to the L/F-transferase family.

The protein resides in the cytoplasm. The enzyme catalyses N-terminal L-lysyl-[protein] + L-leucyl-tRNA(Leu) = N-terminal L-leucyl-L-lysyl-[protein] + tRNA(Leu) + H(+). It catalyses the reaction N-terminal L-arginyl-[protein] + L-leucyl-tRNA(Leu) = N-terminal L-leucyl-L-arginyl-[protein] + tRNA(Leu) + H(+). It carries out the reaction L-phenylalanyl-tRNA(Phe) + an N-terminal L-alpha-aminoacyl-[protein] = an N-terminal L-phenylalanyl-L-alpha-aminoacyl-[protein] + tRNA(Phe). Its function is as follows. Functions in the N-end rule pathway of protein degradation where it conjugates Leu, Phe and, less efficiently, Met from aminoacyl-tRNAs to the N-termini of proteins containing an N-terminal arginine or lysine. This chain is Leucyl/phenylalanyl-tRNA--protein transferase, found in Pseudomonas putida (strain W619).